The sequence spans 158 residues: NAD(P)H-quinone oxidoreductase subunit J, chloroplastic (158 aa).

It belongs to the complex I 30 kDa subunit family. As to quaternary structure, NDH is composed of at least 16 different subunits, 5 of which are encoded in the nucleus.

The protein resides in the plastid. The protein localises to the chloroplast thylakoid membrane. The enzyme catalyses a plastoquinone + NADH + (n+1) H(+)(in) = a plastoquinol + NAD(+) + n H(+)(out). The catalysed reaction is a plastoquinone + NADPH + (n+1) H(+)(in) = a plastoquinol + NADP(+) + n H(+)(out). Functionally, NDH shuttles electrons from NAD(P)H:plastoquinone, via FMN and iron-sulfur (Fe-S) centers, to quinones in the photosynthetic chain and possibly in a chloroplast respiratory chain. The immediate electron acceptor for the enzyme in this species is believed to be plastoquinone. Couples the redox reaction to proton translocation, and thus conserves the redox energy in a proton gradient. This is NAD(P)H-quinone oxidoreductase subunit J, chloroplastic from Angiopteris evecta (Mule's foot fern).